The chain runs to 948 residues: Bifunctional glutamine synthetase adenylyltransferase/adenylyl-removing enzyme (948 aa).

Positions 1 to 445 (MAPPPDTSGS…IFTEVIAEPP (445 aa)) are adenylyl removase. Residues 451-948 (EPLLDGGEAE…WKQIIEAPVF (498 aa)) form an adenylyl transferase region.

This sequence belongs to the GlnE family. Mg(2+) serves as cofactor.

It carries out the reaction [glutamine synthetase]-O(4)-(5'-adenylyl)-L-tyrosine + phosphate = [glutamine synthetase]-L-tyrosine + ADP. It catalyses the reaction [glutamine synthetase]-L-tyrosine + ATP = [glutamine synthetase]-O(4)-(5'-adenylyl)-L-tyrosine + diphosphate. Functionally, involved in the regulation of glutamine synthetase GlnA, a key enzyme in the process to assimilate ammonia. When cellular nitrogen levels are high, the C-terminal adenylyl transferase (AT) inactivates GlnA by covalent transfer of an adenylyl group from ATP to specific tyrosine residue of GlnA, thus reducing its activity. Conversely, when nitrogen levels are low, the N-terminal adenylyl removase (AR) activates GlnA by removing the adenylyl group by phosphorolysis, increasing its activity. The regulatory region of GlnE binds the signal transduction protein PII (GlnB) which indicates the nitrogen status of the cell. This chain is Bifunctional glutamine synthetase adenylyltransferase/adenylyl-removing enzyme, found in Methylococcus capsulatus (strain ATCC 33009 / NCIMB 11132 / Bath).